Consider the following 114-residue polypeptide: Large ribosomal subunit protein bL20 (114 aa).

It belongs to the bacterial ribosomal protein bL20 family.

Its function is as follows. Binds directly to 23S ribosomal RNA and is necessary for the in vitro assembly process of the 50S ribosomal subunit. It is not involved in the protein synthesizing functions of that subunit. The sequence is that of Large ribosomal subunit protein bL20 from Flavobacterium psychrophilum (strain ATCC 49511 / DSM 21280 / CIP 103535 / JIP02/86).